Reading from the N-terminus, the 600-residue chain is Elongation factor 4 (600 aa).

The tr-type G domain occupies 13 to 194 (DRIRNFCIIA…AIVERIPPPR (182 aa)). GTP contacts are provided by residues 25–30 (DHGKST) and 141–144 (NKID).

This sequence belongs to the TRAFAC class translation factor GTPase superfamily. Classic translation factor GTPase family. LepA subfamily.

Its subcellular location is the cell membrane. The enzyme catalyses GTP + H2O = GDP + phosphate + H(+). Its function is as follows. Required for accurate and efficient protein synthesis under certain stress conditions. May act as a fidelity factor of the translation reaction, by catalyzing a one-codon backward translocation of tRNAs on improperly translocated ribosomes. Back-translocation proceeds from a post-translocation (POST) complex to a pre-translocation (PRE) complex, thus giving elongation factor G a second chance to translocate the tRNAs correctly. Binds to ribosomes in a GTP-dependent manner. The sequence is that of Elongation factor 4 from Rubrobacter xylanophilus (strain DSM 9941 / JCM 11954 / NBRC 16129 / PRD-1).